Here is a 622-residue protein sequence, read N- to C-terminus: MTPEDYLKKRLDPEQFEKIKGIDNPELNEFLAKYIELLNPARVFICTDSKEDENYIRRRAIEYGEEKSLAMEGHTIHYDGYYDQARDKARTKILVPKGVEIPFINTMDREKGLKEIHEIMKDIAKGKELFVCFFVLGPKNSVFTIPAVQLTDSAYVAHSEFILYRKGYEEFKRLGREAKFLKFVHSAGELDERKTSKNIDKRRVYIDLEGETVYSANTQYGGNTIGLKKLAFRLTIKRAVEEGWLSEHMFLMRINGPNGRKTYFTGAYPSMCGKTSTAMISWENIVGDDLTFIVDMKGEARGANVEKGVFGIIQGVNQEDDPIIWEVLHSPNEIIFSNVLVKDGKPYWNEMGIPIPDEGENHSGKWWRGKKDSEGNEISPSHKNARFTVSLDAFPNTDLEALETPCGVRVGGMIFGGRDADTWPPVREAFDWAHGVITMGAALESETTAATLGKEGVRAFNPMAILDFLSVHIGKYLKNYLEFEKKLRIKPKIFAVNYFLREKDGKWLNHKLDKSVWLKWMELRVHGDVDAIKTPVGYIPKYEDLKRLFKEVLNKDYSREDYEKQFVIRVPEFLAKIERIEKIYRDVGNIPEELFKVLEEERHRLIEAKEKYGDYISPFKFL.

Substrate-binding positions include Arg-86 and 220-222 (YGG). Mn(2+)-binding residues include Lys-229 and His-248. Ser-270 lines the substrate pocket. 271 to 276 (MCGKTS) is a GTP binding site. Cys-272 is a catalytic residue. Asp-289 provides a ligand contact to Mn(2+). The segment covering 360-374 (ENHSGKWWRGKKDSE) has biased composition (basic and acidic residues). Residues 360-381 (ENHSGKWWRGKKDSEGNEISPS) are disordered. A substrate-binding site is contributed by 384–386 (NAR). Residues Arg-386 and Arg-418 each coordinate GTP.

The protein belongs to the phosphoenolpyruvate carboxykinase [GTP] family. Requires Mn(2+) as cofactor.

The protein localises to the cytoplasm. The catalysed reaction is oxaloacetate + GTP = phosphoenolpyruvate + GDP + CO2. It functions in the pathway carbohydrate biosynthesis; gluconeogenesis. Its function is as follows. Catalyzes the conversion of oxaloacetate (OAA) to phosphoenolpyruvate (PEP), the rate-limiting step in the metabolic pathway that produces glucose from lactate and other precursors derived from the citric acid cycle. The chain is Phosphoenolpyruvate carboxykinase [GTP] from Thermococcus sibiricus (strain DSM 12597 / MM 739).